Reading from the N-terminus, the 342-residue chain is Anthranilate phosphoribosyltransferase (342 aa).

5-phospho-alpha-D-ribose 1-diphosphate contacts are provided by residues G90, 93–94 (GS), T98, 100–103 (NIST), 118–126 (KHGNRRATS), and S130. Position 90 (G90) interacts with anthranilate. S102 is a Mg(2+) binding site. An anthranilate-binding site is contributed by N121. R176 is an anthranilate binding site. 2 residues coordinate Mg(2+): D235 and E236.

This sequence belongs to the anthranilate phosphoribosyltransferase family. In terms of assembly, homodimer. Mg(2+) serves as cofactor.

The catalysed reaction is N-(5-phospho-beta-D-ribosyl)anthranilate + diphosphate = 5-phospho-alpha-D-ribose 1-diphosphate + anthranilate. It participates in amino-acid biosynthesis; L-tryptophan biosynthesis; L-tryptophan from chorismate: step 2/5. In terms of biological role, catalyzes the transfer of the phosphoribosyl group of 5-phosphorylribose-1-pyrophosphate (PRPP) to anthranilate to yield N-(5'-phosphoribosyl)-anthranilate (PRA). This chain is Anthranilate phosphoribosyltransferase, found in Rhodopirellula baltica (strain DSM 10527 / NCIMB 13988 / SH1).